The chain runs to 379 residues: Cytochrome b (379 aa).

A run of 4 helical transmembrane segments spans residues 33 to 53 (FGSL…FLAM), 77 to 98 (WLIR…FIHV), 113 to 133 (WNIG…GYVL), and 178 to 198 (FFAF…VHLL). Heme b contacts are provided by His-83 and His-97. Heme b contacts are provided by His-182 and His-196. His-201 lines the a ubiquinone pocket. Helical transmembrane passes span 226–246 (IKDL…ALFF), 288–308 (LGGV…PLLN), 320–340 (VTQT…WIGG), and 347–367 (FTMI…ILIP).

Belongs to the cytochrome b family. As to quaternary structure, the cytochrome bc1 complex contains 11 subunits: 3 respiratory subunits (MT-CYB, CYC1 and UQCRFS1), 2 core proteins (UQCRC1 and UQCRC2) and 6 low-molecular weight proteins (UQCRH/QCR6, UQCRB/QCR7, UQCRQ/QCR8, UQCR10/QCR9, UQCR11/QCR10 and a cleavage product of UQCRFS1). This cytochrome bc1 complex then forms a dimer. Heme b is required as a cofactor.

It is found in the mitochondrion inner membrane. Component of the ubiquinol-cytochrome c reductase complex (complex III or cytochrome b-c1 complex) that is part of the mitochondrial respiratory chain. The b-c1 complex mediates electron transfer from ubiquinol to cytochrome c. Contributes to the generation of a proton gradient across the mitochondrial membrane that is then used for ATP synthesis. The sequence is that of Cytochrome b (MT-CYB) from Akodon philipmyersi (Myers' grass mouse).